Reading from the N-terminus, the 693-residue chain is MA3 DOMAIN-CONTAINING TRANSLATION REGULATORY FACTOR 2 (693 aa).

The tract at residues 25–60 (SLDPLPQANMAEDLTKSRRHSPIKVEGSEETWGVED) is disordered. The region spanning 90–211 (EYKKKATVIV…PPAFLKKQMK (122 aa)) is the MI 1 domain. A Nuclear localization signal 1 motif is present at residues 241–248 (EKRWGGTD). 3 consecutive MI domains span residues 254–375 (DVKA…SLSA), 389–510 (VFKD…EVLN), and 560–681 (EVKE…EDSQ). Residues 430-437 (VKYLITLA) carry the Nuclear localization signal 2 motif. The segment at 673–693 (ESFASEDSQSKKQNGSSSSSG) is disordered. The segment covering 683-693 (KKQNGSSSSSG) has biased composition (low complexity).

Belongs to the PDCD4 family. In terms of assembly, binds to EIF4A1. The association with ribosomes is modulated by cellular energy status and TOR activity. Mostly expressed in reproductive tissues, such as flower buds and flowers, and, to a lower extent, in vegetative tissues, such as leaves, roots and stems.

The protein resides in the nucleus. It localises to the cytoplasm. It is found in the cytosol. Involved in target of rapamycin (TOR)-regulated translation control, especially under energy-deficient conditions. The chain is MA3 DOMAIN-CONTAINING TRANSLATION REGULATORY FACTOR 2 from Arabidopsis thaliana (Mouse-ear cress).